We begin with the raw amino-acid sequence, 189 residues long: Elongation factor P (189 aa).

The protein belongs to the elongation factor P family.

The protein resides in the cytoplasm. The protein operates within protein biosynthesis; polypeptide chain elongation. Its function is as follows. Involved in peptide bond synthesis. Stimulates efficient translation and peptide-bond synthesis on native or reconstituted 70S ribosomes in vitro. Probably functions indirectly by altering the affinity of the ribosome for aminoacyl-tRNA, thus increasing their reactivity as acceptors for peptidyl transferase. This is Elongation factor P from Ehrlichia ruminantium (strain Gardel).